Here is a 313-residue protein sequence, read N- to C-terminus: MAETFKHTTVLLDEAVNGLSIRSNGIYIDGTFGRGGHSRLILSHLGPEGRLLAIDRDPQAVEVANTIDDARFSIIHGPFSELAEYVEARGLTGKIDGILLDLGVSSPQLDDPERGFSFMRDGPLDMRMDPTRGQSAADWLMKAEADDIAWVLKTFGEERFAKRIARAIVERNRIDPLTRTKALAELIAAASPIREKYKHPATRSFQAIRIYINSELEEIERALDGALTVLAPGGRLSVISFHSLEDRIVKRFIRQHSRGPQVPAGLPLTEAQLRSQGGPTLKSVGKMMPPDDEVADNPRARSSVLRFAERLPS.

S-adenosyl-L-methionine-binding positions include 35–37, Asp55, Phe79, Asp101, and Gln108; that span reads GGH. The segment at 276-300 is disordered; that stretch reads QGGPTLKSVGKMMPPDDEVADNPRA.

The protein belongs to the methyltransferase superfamily. RsmH family.

The protein localises to the cytoplasm. The catalysed reaction is cytidine(1402) in 16S rRNA + S-adenosyl-L-methionine = N(4)-methylcytidine(1402) in 16S rRNA + S-adenosyl-L-homocysteine + H(+). Its function is as follows. Specifically methylates the N4 position of cytidine in position 1402 (C1402) of 16S rRNA. This is Ribosomal RNA small subunit methyltransferase H from Dickeya chrysanthemi (strain Ech1591) (Dickeya zeae (strain Ech1591)).